We begin with the raw amino-acid sequence, 109 residues long: U26-theraphotoxin-Cg1b (109 aa).

The first 18 residues, 1-18 (MNTIIPLLLLSLLITVYA), serve as a signal peptide directing secretion. Positions 19-67 (YALEDGNKEEMQDIAESEFEASNEMLQLAHLLEADRAETEEDRNSRQKR) are excised as a propeptide. 3 disulfide bridges follow: C68/C83, C75/C88, and C82/C103.

The protein belongs to the neurotoxin 14 (magi-1) family. 07 (Jztx-56) subfamily. In terms of tissue distribution, expressed by the venom gland.

It localises to the secreted. Its function is as follows. Probable ion channel inhibitor. In Chilobrachys guangxiensis (Chinese earth tiger tarantula), this protein is U26-theraphotoxin-Cg1b.